Reading from the N-terminus, the 75-residue chain is Protein myomixer (75 aa).

The Cytoplasmic segment spans residues 1–5 (MPAVF). Residues 6 to 28 (LLLRSLVVRLFGSRLAASGVQLL) traverse the membrane as a helical segment. The Extracellular portion of the chain corresponds to 29-75 (RRILTTATGHLGTVLRNIWERISSQQSKEAILGCVLCLLNMHKKVDN). The AxLyCxL motif lies at 58–67 (AILGCVLCLL).

It belongs to the MYMX family. In terms of tissue distribution, specifically expressed in the developing myotome.

It localises to the cell membrane. Functionally, myoblast-specific protein that mediates myoblast fusion, an essential step for the formation of multi-nucleated muscle fibers. Involved in membrane fusion downstream of the lipid mixing step mediated by mymk. Acts by generating membrane stresses via its extracellular C-terminus, leading to drive fusion pore formation. The protein is Protein myomixer of Danio rerio (Zebrafish).